We begin with the raw amino-acid sequence, 37 residues long: Chitinase-like protein (37 aa).

Residues 1-20 (VLLSVGGDADTESPEKKNLG) are disordered. Residues 1-37 (VLLSVGGDADTESPEKKNLGGVSIVDLSMDDFRGLLT) form the GH18 domain.

The protein belongs to the glycosyl hydrolase 18 family. IDGF subfamily. In terms of processing, glycosylated.

It localises to the secreted. In terms of biological role, cooperates with insulin-like peptides to stimulate the proliferation, polarization and motility of imaginal disk cells. May act by stabilizing the binding of insulin-like peptides to its receptor through a simultaneous interaction with both molecules to form a multiprotein signaling complex. The polypeptide is Chitinase-like protein (Heliothis virescens (Tobacco budworm moth)).